We begin with the raw amino-acid sequence, 289 residues long: MKKLSFQQIILALQNYWQDYGCAILQPYDAHVGAGTFHPATVLRCLGSKPWSVAYVQPSRRPGDSRYGMHPNRMQHYYQFQVILKPSPDNIQELYLKSLECLGIDLKKHDIRFVEDDWESPTLGAAGLGWEVWCNGMEVSQFTYMQQIGGIECRPVAGEITYGLERLALYIQGVDEVKELDWNGQIGEKALKYGEVDFEAERQFSKYNLELANSKMLLRHFKDSEEECKRLVDGDVPLAAYDECLKASHTFNQLNALGVISVTERASYILRVRHLAKICCMKWLELSGE.

Belongs to the class-II aminoacyl-tRNA synthetase family. As to quaternary structure, tetramer of two alpha and two beta subunits.

The protein resides in the cytoplasm. The enzyme catalyses tRNA(Gly) + glycine + ATP = glycyl-tRNA(Gly) + AMP + diphosphate. This chain is Glycine--tRNA ligase alpha subunit, found in Rickettsia felis (strain ATCC VR-1525 / URRWXCal2) (Rickettsia azadi).